The following is a 189-amino-acid chain: Segregation and condensation protein B (189 aa).

The protein belongs to the ScpB family. Homodimer. Homodimerization may be required to stabilize the binding of ScpA to the Smc head domains. Component of a cohesin-like complex composed of ScpA, ScpB and the Smc homodimer, in which ScpA and ScpB bind to the head domain of Smc. The presence of the three proteins is required for the association of the complex with DNA.

It localises to the cytoplasm. Functionally, participates in chromosomal partition during cell division. May act via the formation of a condensin-like complex containing Smc and ScpA that pull DNA away from mid-cell into both cell halves. The polypeptide is Segregation and condensation protein B (Clostridium tetani (strain Massachusetts / E88)).